A 283-amino-acid polypeptide reads, in one-letter code: Pantothenate synthetase (283 aa).

ATP is bound at residue 30–37 (MGNLHDGH). Histidine 37 functions as the Proton donor in the catalytic mechanism. Glutamine 61 serves as a coordination point for (R)-pantoate. Glutamine 61 contributes to the beta-alanine binding site. 149-152 (GEKD) serves as a coordination point for ATP. Glutamine 155 provides a ligand contact to (R)-pantoate. 186–189 (LSSR) is a binding site for ATP.

Belongs to the pantothenate synthetase family. Homodimer.

It localises to the cytoplasm. The catalysed reaction is (R)-pantoate + beta-alanine + ATP = (R)-pantothenate + AMP + diphosphate + H(+). It functions in the pathway cofactor biosynthesis; (R)-pantothenate biosynthesis; (R)-pantothenate from (R)-pantoate and beta-alanine: step 1/1. Functionally, catalyzes the condensation of pantoate with beta-alanine in an ATP-dependent reaction via a pantoyl-adenylate intermediate. The chain is Pantothenate synthetase from Escherichia coli (strain SMS-3-5 / SECEC).